The chain runs to 290 residues: ADP-dependent (S)-NAD(P)H-hydrate dehydratase (290 aa).

Residues 5 to 278 form the YjeF C-terminal domain; the sequence is NQTLLEKVII…RYLPKIMKII (274 aa). (6S)-NADPHX contacts are provided by Ala-40, Gly-103, and His-152. An AMP-binding site is contributed by Gly-218. A (6S)-NADPHX-binding site is contributed by Asp-219.

It belongs to the NnrD/CARKD family. As to quaternary structure, homotetramer. Mg(2+) serves as cofactor.

The enzyme catalyses (6S)-NADHX + ADP = AMP + phosphate + NADH + H(+). It catalyses the reaction (6S)-NADPHX + ADP = AMP + phosphate + NADPH + H(+). Functionally, catalyzes the dehydration of the S-form of NAD(P)HX at the expense of ADP, which is converted to AMP. Together with NAD(P)HX epimerase, which catalyzes the epimerization of the S- and R-forms, the enzyme allows the repair of both epimers of NAD(P)HX, a damaged form of NAD(P)H that is a result of enzymatic or heat-dependent hydration. The chain is ADP-dependent (S)-NAD(P)H-hydrate dehydratase from Streptococcus pneumoniae (strain ATCC BAA-255 / R6).